The following is a 252-amino-acid chain: 3-dehydroquinate dehydratase (252 aa).

3-dehydroquinate-binding positions include 46–48 (EWR) and R82. The active-site Proton donor/acceptor is the H143. K170 serves as the catalytic Schiff-base intermediate with substrate. 3-dehydroquinate contacts are provided by R212, S231, and Q235.

It belongs to the type-I 3-dehydroquinase family. As to quaternary structure, homodimer.

It carries out the reaction 3-dehydroquinate = 3-dehydroshikimate + H2O. Its pathway is metabolic intermediate biosynthesis; chorismate biosynthesis; chorismate from D-erythrose 4-phosphate and phosphoenolpyruvate: step 3/7. Functionally, involved in the third step of the chorismate pathway, which leads to the biosynthesis of aromatic amino acids. Catalyzes the cis-dehydration of 3-dehydroquinate (DHQ) and introduces the first double bond of the aromatic ring to yield 3-dehydroshikimate. The protein is 3-dehydroquinate dehydratase of Listeria monocytogenes serovar 1/2a (strain ATCC BAA-679 / EGD-e).